Reading from the N-terminus, the 271-residue chain is Carboxy-terminal domain RNA polymerase II polypeptide A small phosphatase 2 (271 aa).

A Phosphoserine modification is found at serine 5. The FCP1 homology domain maps to 97–255 (EDQGRICVVI…LNLIPIFEEL (159 aa)). Aspartate 107 (4-aspartylphosphate intermediate) is an active-site residue. Residues aspartate 107, aspartate 109, and asparagine 218 each contribute to the Mg(2+) site. Aspartate 109 (proton donor) is an active-site residue.

In terms of assembly, monomer. Interacts with REST. Mg(2+) is required as a cofactor. As to expression, expression is restricted to non-neuronal tissues. Highest expression in pancreas and lowest in liver.

The protein resides in the nucleus. It carries out the reaction O-phospho-L-seryl-[protein] + H2O = L-seryl-[protein] + phosphate. The catalysed reaction is O-phospho-L-threonyl-[protein] + H2O = L-threonyl-[protein] + phosphate. In terms of biological role, preferentially catalyzes the dephosphorylation of 'Ser-5' within the tandem 7 residue repeats in the C-terminal domain (CTD) of the largest RNA polymerase II subunit POLR2A. Negatively regulates RNA polymerase II transcription, possibly by controlling the transition from initiation/capping to processive transcript elongation. Recruited by REST to neuronal genes that contain RE-1 elements, leading to neuronal gene silencing in non-neuronal cells. May contribute to the development of sarcomas. This chain is Carboxy-terminal domain RNA polymerase II polypeptide A small phosphatase 2 (CTDSP2), found in Homo sapiens (Human).